The following is a 160-amino-acid chain: uncharacterized protein (160 aa).

The RING-type zinc-finger motif lies at 8-46; that stretch reads CAVCLDFFVEPCIIECGHSYCRFCIESHLNINEKCPLCR.

This is an uncharacterized protein from Caenorhabditis elegans.